Consider the following 452-residue polypeptide: Pup--protein ligase (452 aa).

Glu-9 lines the Mg(2+) pocket. ATP is bound at residue Arg-53. Residue Tyr-55 coordinates Mg(2+). Asp-57 serves as the catalytic Proton acceptor. Glu-63 contributes to the Mg(2+) binding site. ATP is bound by residues Thr-66 and Trp-419.

Belongs to the Pup ligase/Pup deamidase family. Pup-conjugating enzyme subfamily.

The catalysed reaction is ATP + [prokaryotic ubiquitin-like protein]-L-glutamate + [protein]-L-lysine = ADP + phosphate + N(6)-([prokaryotic ubiquitin-like protein]-gamma-L-glutamyl)-[protein]-L-lysine.. It functions in the pathway protein degradation; proteasomal Pup-dependent pathway. The protein operates within protein modification; protein pupylation. Functionally, catalyzes the covalent attachment of the prokaryotic ubiquitin-like protein modifier Pup to the proteasomal substrate proteins, thereby targeting them for proteasomal degradation. This tagging system is termed pupylation. The ligation reaction involves the side-chain carboxylate of the C-terminal glutamate of Pup and the side-chain amino group of a substrate lysine. The protein is Pup--protein ligase of Streptosporangium roseum (strain ATCC 12428 / DSM 43021 / JCM 3005 / KCTC 9067 / NCIMB 10171 / NRRL 2505 / NI 9100).